The primary structure comprises 332 residues: Alanine racemase (332 aa).

Lys-33 acts as the Proton acceptor; specific for D-alanine in catalysis. An N6-(pyridoxal phosphate)lysine modification is found at Lys-33. Arg-115 is a binding site for substrate. Catalysis depends on Tyr-245, which acts as the Proton acceptor; specific for L-alanine. Residue Met-286 coordinates substrate.

The protein belongs to the alanine racemase family. Requires pyridoxal 5'-phosphate as cofactor.

It catalyses the reaction L-alanine = D-alanine. Its pathway is amino-acid biosynthesis; D-alanine biosynthesis; D-alanine from L-alanine: step 1/1. In terms of biological role, catalyzes the interconversion of L-alanine and D-alanine. May also act on other amino acids. This chain is Alanine racemase (alr), found in Nitratiruptor sp. (strain SB155-2).